The chain runs to 278 residues: DNA oxidative demethylase ALKBH2 (278 aa).

The interval 1 to 49 (MDRFLVKGAVGSLKRRMEQEQTGGGPAGLAEEEGNSKKNPRRAAPGNGV) is disordered. Positions 3–7 (RFLVK) match the PCNA-binding motif. Residues 101 to 103 (FGK) and 121 to 123 (YTF) each bind substrate. The region spanning 151–256 (TFNFVLINRY…RVNLTFRKIL (106 aa)) is the Fe2OG dioxygenase domain. Residues N158, Y160, and H170 each contribute to the 2-oxoglutarate site. Residues H170 and D172 each contribute to the Fe cation site. D173 contacts substrate. 4 residues coordinate 2-oxoglutarate: H235, R247, T251, and R253. H235 contributes to the Fe cation binding site.

This sequence belongs to the alkB family. As to quaternary structure, interacts with PCNA homotrimer; this interaction is enhanced during the S-phase of the cell cycle. Interacts with nucleolar proteins NCL, UBTF and NPM1. Interacts with XRCC5-XRCC6 heterodimer. The cofactor is Fe(2+).

Its subcellular location is the nucleus. The protein localises to the nucleolus. The protein resides in the nucleoplasm. It carries out the reaction a methylated nucleobase within DNA + 2-oxoglutarate + O2 = a nucleobase within DNA + formaldehyde + succinate + CO2. The catalysed reaction is an N(1)-methyl-2'-deoxyadenosine in double-stranded DNA + 2-oxoglutarate + O2 = a 2'-deoxyadenosine in double-stranded DNA + formaldehyde + succinate + CO2 + H(+). The enzyme catalyses an N(1)-methyl-2'-deoxyadenosine in single-stranded DNA + 2-oxoglutarate + O2 = a 2'-deoxyadenosine in single-stranded DNA + formaldehyde + succinate + CO2 + H(+). It catalyses the reaction an N(3)-methyl-2'-deoxycytidine in double-stranded DNA + 2-oxoglutarate + O2 = a 2'-deoxycytidine in double-stranded DNA + formaldehyde + succinate + CO2 + H(+). It carries out the reaction an N(3)-methyl-2'-deoxycytidine in single-stranded DNA + 2-oxoglutarate + O2 = a 2'-deoxycytidine in single-stranded DNA + formaldehyde + succinate + CO2 + H(+). The catalysed reaction is a 1,N(6)-etheno-2'-deoxyadenosine in double-stranded DNA + 2-oxoglutarate + O2 + H2O = a 2'-deoxyadenosine in double-stranded DNA + glyoxal + succinate + CO2. The enzyme catalyses a 1,N(6)-etheno-2'-deoxyadenosine in single-stranded DNA + 2-oxoglutarate + O2 + H2O = a 2'-deoxyadenosine in single-stranded DNA + glyoxal + succinate + CO2. It catalyses the reaction a 3,N(4)-etheno-2'-deoxycytidine in double-stranded DNA + 2-oxoglutarate + O2 + H2O = a 2'-deoxycytidine in double-stranded DNA + glyoxal + succinate + CO2. It carries out the reaction a 3,N(4)-etheno-2'-deoxycytidine in single-stranded DNA + 2-oxoglutarate + O2 + H2O = a 2'-deoxycytidine in single-stranded DNA + glyoxal + succinate + CO2. The catalysed reaction is a 1,N(2)-etheno-2'-deoxyguanosine in double-stranded DNA + 2-oxoglutarate + O2 + H2O = a 2'-deoxyguanosine in double-stranded DNA + glyoxal + succinate + CO2. With respect to regulation, activated by ascorbate and magnesium ions. Dioxygenase that repairs alkylated nucleic acid bases by direct reversal oxidative dealkylation. Can process both double-stranded (ds) and single-stranded (ss) DNA substrates, with a strong preference for dsDNA. Uses molecular oxygen, 2-oxoglutarate and iron as cofactors to oxidize the alkyl groups that are subsequently released as aldehydes, regenerating the undamaged bases. Probes the base pair stability, locates a weakened base pair and flips the damaged base to accommodate the lesion in its active site for efficient catalysis. Repairs monoalkylated bases, specifically N1-methyladenine and N3-methylcytosine, as well as higher order alkyl adducts such as bases modified with exocyclic bridged adducts known as etheno adducts including 1,N6-ethenoadenine, 3,N4-ethenocytosine and 1,N2-ethenoguanine. Acts as a gatekeeper of genomic integrity under alkylation stress. Efficiently repairs alkylated lesions in ribosomal DNA (rDNA). These lesions can cause ss- and dsDNA strand breaks that severely impair rDNA transcription. In a response mechanism to DNA damage, associates with PCNA at replication forks to repair alkylated adducts prior to replication. The sequence is that of DNA oxidative demethylase ALKBH2 (ALKBH2) from Bos taurus (Bovine).